The primary structure comprises 68 residues: Large ribosomal subunit protein uL29 (68 aa).

This sequence belongs to the universal ribosomal protein uL29 family.

This Streptococcus suis (strain 98HAH33) protein is Large ribosomal subunit protein uL29.